We begin with the raw amino-acid sequence, 361 residues long: Adenosine kinase (361 aa).

The Nuclear localization signal signature appears at 7–15 (PKPKKLKVE). Asp34 is an adenosine binding site. Mg(2+) is bound at residue Ser48. At Tyr76 the chain carries Phosphotyrosine. Position 147 (Asn147) interacts with Mg(2+). Position 305 (Gln305) interacts with adenosine. Residue Asp316 is part of the active site. The Proton acceptor role is filled by Asp316.

This sequence belongs to the carbohydrate kinase PfkB family. As to quaternary structure, monomer. Mg(2+) is required as a cofactor.

It localises to the nucleus. It catalyses the reaction adenosine + ATP = AMP + ADP + H(+). It functions in the pathway purine metabolism; AMP biosynthesis via salvage pathway; AMP from adenosine: step 1/1. Functionally, catalyzes the phosphorylation of the purine nucleoside adenosine at the 5' position in an ATP-dependent manner. Serves as a potential regulator of concentrations of extracellular adenosine and intracellular adenine nucleotides. This Rattus norvegicus (Rat) protein is Adenosine kinase (Adk).